The sequence spans 113 residues: Antisense of depressing factor protein 1 (113 aa).

Residues 1 to 11 show a composition bias toward basic residues; that stretch reads MGKCSMKKKGV. Residues 1–35 are disordered; that stretch reads MGKCSMKKKGVGKNVGVGKKVQKKRSISTAERKRT.

It belongs to the ADF1 family.

It localises to the nucleus. Its function is as follows. Transcriptional repressor which negatively regulates transcription of FYV5 by binding to the promoter on the sense strand. The sequence is that of Antisense of depressing factor protein 1 from Saccharomyces cerevisiae (strain ATCC 204508 / S288c) (Baker's yeast).